Here is a 492-residue protein sequence, read N- to C-terminus: Protein GvpD2 (492 aa).

39–46 (GAPGTGKT) lines the ATP pocket. A compositionally biased stretch (basic and acidic residues) spans 355–368 (RDHDDAVDPDRLPG). The segment at 355-379 (RDHDDAVDPDRLPGHDTTPTEHGTL) is disordered.

Belongs to the gas vesicle GvpD family. Homodimer. Interacts with GvpE, also with GvpE from H.mediterranei.

Its subcellular location is the cytoplasm. Its function is as follows. Causes a decrease in the amount of GvpE protein. Gas vesicles are hollow, gas filled proteinaceous nanostructures found in several microbial planktonic microorganisms. They allow positioning of halobacteria at the optimal depth for growth in the poorly aerated, shallow brine pools of their habitat. Functionally, expression of 2 c-vac DNA fragments containing 2 divergently transcribed regions (gvpE-gvpF-gvpG-gvpH-gvpI-gvpJ-gvpK-gvpL-gvpM and gvpA-gvpC-gvpN-gvpO) allows H.volcanii to produce gas vesicles. In Halobacterium salinarum (strain ATCC 700922 / JCM 11081 / NRC-1) (Halobacterium halobium), this protein is Protein GvpD2.